The chain runs to 367 residues: Protein RecA (367 aa).

73-80 provides a ligand contact to ATP; it reads GPESSGKT. The interval 345–367 is disordered; the sequence is DEPVAKKASAKESKEAKELKEVE.

The protein belongs to the RecA family.

It localises to the cytoplasm. Its function is as follows. Can catalyze the hydrolysis of ATP in the presence of single-stranded DNA, the ATP-dependent uptake of single-stranded DNA by duplex DNA, and the ATP-dependent hybridization of homologous single-stranded DNAs. It interacts with LexA causing its activation and leading to its autocatalytic cleavage. This chain is Protein RecA, found in Herminiimonas arsenicoxydans.